Consider the following 704-residue polypeptide: Elongation factor G (704 aa).

The tr-type G domain maps to 8 to 290; that stretch reads EKYRNIGICA…GVVRYLPAPN (283 aa). GTP contacts are provided by residues 17–24, 88–92, and 142–145; these read AHVDAGKT, DTPGH, and NKMD.

It belongs to the TRAFAC class translation factor GTPase superfamily. Classic translation factor GTPase family. EF-G/EF-2 subfamily.

Its subcellular location is the cytoplasm. Functionally, catalyzes the GTP-dependent ribosomal translocation step during translation elongation. During this step, the ribosome changes from the pre-translocational (PRE) to the post-translocational (POST) state as the newly formed A-site-bound peptidyl-tRNA and P-site-bound deacylated tRNA move to the P and E sites, respectively. Catalyzes the coordinated movement of the two tRNA molecules, the mRNA and conformational changes in the ribosome. This chain is Elongation factor G, found in Francisella tularensis subsp. holarctica (strain LVS).